A 382-amino-acid chain; its full sequence is Dual-specificity RNA methyltransferase RlmN (382 aa).

E95 functions as the Proton acceptor in the catalytic mechanism. Residues 101–348 (EDDRGTLCIS…TTVRKTRGDD (248 aa)) enclose the Radical SAM core domain. C108 and C353 are disulfide-bonded. Residues C115, C119, and C122 each coordinate [4Fe-4S] cluster. S-adenosyl-L-methionine is bound by residues 179–180 (GE), S211, 233–235 (SLH), and N310. Residue C353 is the S-methylcysteine intermediate of the active site.

Belongs to the radical SAM superfamily. RlmN family. [4Fe-4S] cluster is required as a cofactor.

It localises to the cytoplasm. It catalyses the reaction adenosine(2503) in 23S rRNA + 2 reduced [2Fe-2S]-[ferredoxin] + 2 S-adenosyl-L-methionine = 2-methyladenosine(2503) in 23S rRNA + 5'-deoxyadenosine + L-methionine + 2 oxidized [2Fe-2S]-[ferredoxin] + S-adenosyl-L-homocysteine. It carries out the reaction adenosine(37) in tRNA + 2 reduced [2Fe-2S]-[ferredoxin] + 2 S-adenosyl-L-methionine = 2-methyladenosine(37) in tRNA + 5'-deoxyadenosine + L-methionine + 2 oxidized [2Fe-2S]-[ferredoxin] + S-adenosyl-L-homocysteine. Functionally, specifically methylates position 2 of adenine 2503 in 23S rRNA and position 2 of adenine 37 in tRNAs. m2A2503 modification seems to play a crucial role in the proofreading step occurring at the peptidyl transferase center and thus would serve to optimize ribosomal fidelity. The chain is Dual-specificity RNA methyltransferase RlmN from Bordetella pertussis (strain Tohama I / ATCC BAA-589 / NCTC 13251).